The chain runs to 781 residues: MAP7 domain-containing protein 2 (781 aa).

Over residues 1-32 (MERSGGNGGGGGGGGGGGGGYGGSGGGGGGAG) the composition is skewed to gly residues. Disordered stretches follow at residues 1 to 37 (MERS…PSEG), 50 to 87 (AEAA…REER), 120 to 567 (LEEQ…AAKQ), and 597 to 628 (TRKS…ANKA). Composition is skewed to basic and acidic residues over residues 71–87 (LKSD…REER) and 120–158 (LEEQ…RSLE). A coiled-coil region spans residues 73–168 (SDERQRLAKE…RTQQLELKKK (96 aa)). The span at 192–210 (LTLATSTPPLDTGTTTAAA) shows a compositional bias: low complexity. Composition is skewed to polar residues over residues 211-245 (ESTN…TVAI) and 257-267 (LKSSYKSSPTR). Positions 318 to 328 (RRCEPPEDISK) are enriched in basic and acidic residues. The segment covering 329–348 (RLSSPVKSKITSKTYPQSPK) has biased composition (polar residues). Composition is skewed to basic and acidic residues over residues 370-387 (ETPK…EKEG), 397-436 (PREE…EHSA), 453-567 (LAEK…AAKQ), and 597-613 (TRKS…DPKV).

Belongs to the MAP7 family. As to quaternary structure, interacts (via N-terminus) with microtubules; facilitates microtubule stabilization. Interacts with kinesin-1 family members, KIF5A, KIF5B and KIF5C. In terms of tissue distribution, expressed predominantly in the glomerular layer of the olfactory bulb and Sertoli cells of the testis.

It is found in the cytoplasm. The protein localises to the cytoskeleton. It localises to the microtubule organizing center. Its subcellular location is the centrosome. The protein resides in the midbody. It is found in the cell projection. The protein localises to the neuron projection. It localises to the axon. Microtubule-stabilizing protein involved in the control of cell motility and neurite outgrowth. Acts as a critical cofactor for kinesin transport; in the proximal axon regulates kinesin-1 family members, KIF5A, KIF5B and KIF5C recruitment to microtubules and contributes to kinesin-1-mediated transport in the axons. This chain is MAP7 domain-containing protein 2 (Map7d2), found in Mus musculus (Mouse).